Consider the following 174-residue polypeptide: MGKITFYEDRGFQGRHYECSSDCPNLQPYFSRCNSIRVDSGCWMLYERPNYQGHQYFLRRGDYPDYQQWLGFSDSIRSCCLIPQTSSHRLRLYEREDHKGLMVELSEDCSCIQDRFHLSEVRSVHVLEGCWVLYEMPNYLGRQYLLRPQEYRRYHDWGAMDAKAGSLRRVVDLY.

2 Beta/gamma crystallin 'Greek key' domains span residues 2–40 and 41–83; these read GKIT…RVDS and GCWM…CLIP. The residue at position 23 (C23) is an S-methylcysteine. The interval 84–87 is connecting peptide; the sequence is QTSS. Beta/gamma crystallin 'Greek key' domains are found at residues 88-128 and 129-171; these read HRLR…HVLE and GCWV…RRVV.

This sequence belongs to the beta/gamma-crystallin family. Monomer.

Crystallins are the dominant structural components of the vertebrate eye lens. The chain is Gamma-crystallin C (CRYGC) from Canis lupus familiaris (Dog).